The sequence spans 136 residues: uncharacterized protein (136 aa).

This is an uncharacterized protein from Mycoplasma pneumoniae (strain ATCC 29342 / M129 / Subtype 1) (Mycoplasmoides pneumoniae).